The following is a 179-amino-acid chain: Inner membrane-spanning protein YciB (179 aa).

5 helical membrane-spanning segments follow: residues 22–42 (IYAA…YSWV), 50–70 (MALI…FFHN), 76–96 (WKVT…QWVM), 121–141 (LAWA…AFWL), and 149–169 (FKVF…GIYI).

Belongs to the YciB family.

It is found in the cell inner membrane. Plays a role in cell envelope biogenesis, maintenance of cell envelope integrity and membrane homeostasis. The sequence is that of Inner membrane-spanning protein YciB from Shigella boydii serotype 18 (strain CDC 3083-94 / BS512).